The primary structure comprises 317 residues: Epidermal growth factor-like protein (317 aa).

The signal sequence occupies residues Met-1–Ala-23. The segment at Thr-24 to Tyr-33 is may be required for E.coli agglutination activity. EGF-like domains follow at residues His-93 to Ile-128, Val-130 to Thr-161, Gly-163 to Gln-195, Ala-208 to Ala-243, Lys-245 to Ile-280, and Tyr-282 to Val-315. 18 disulfide bridges follow: Cys-98-Cys-107, Cys-102-Cys-113, Cys-115-Cys-127, Cys-131-Cys-140, Cys-135-Cys-145, Cys-147-Cys-160, Cys-164-Cys-174, Cys-168-Cys-180, Cys-182-Cys-194, Cys-213-Cys-222, Cys-217-Cys-228, Cys-230-Cys-242, Cys-246-Cys-255, Cys-250-Cys-261, Cys-263-Cys-279, Cys-283-Cys-292, Cys-287-Cys-298, and Cys-300-Cys-314.

Its subcellular location is the secreted. Binds to lipopolysaccharides (LPS) present on the cell walls of Gram-negative bacteria, behaving as a pattern recognition receptor (PRR). Induces bacterial aggregation and enhances their subsequent clearance by the innate immune response. Binds to the inner core oligosaccharides region of rough-type bacterial LPS. Displays activity against the Gram-negative bacterium E.coli. Does not display any activity against the Gram-positive bacterium S.aureus or the fungi C.albicans. This chain is Epidermal growth factor-like protein, found in Holotrichia diomphalia (Korean black chafer).